The primary structure comprises 101 residues: MAEIGTMHYLVVAAMLFIIGTVGVVTRRNVVVILMSIELILNAVNLNLVAFSRLYGLHGQVFSIFVMVDAAAEAAVGLGIVIAFFRNKETVNVDEVDLLKW.

Transmembrane regions (helical) follow at residues 4 to 24 (IGTM…TVGV), 31 to 51 (VVIL…LVAF), and 64 to 84 (IFVM…VIAF).

The protein belongs to the complex I subunit 4L family. NDH-1 is composed of 14 different subunits. Subunits NuoA, H, J, K, L, M, N constitute the membrane sector of the complex.

It is found in the cell inner membrane. The enzyme catalyses a quinone + NADH + 5 H(+)(in) = a quinol + NAD(+) + 4 H(+)(out). NDH-1 shuttles electrons from NADH, via FMN and iron-sulfur (Fe-S) centers, to quinones in the respiratory chain. The immediate electron acceptor for the enzyme in this species is believed to be ubiquinone. Couples the redox reaction to proton translocation (for every two electrons transferred, four hydrogen ions are translocated across the cytoplasmic membrane), and thus conserves the redox energy in a proton gradient. The protein is NADH-quinone oxidoreductase subunit K 1 of Koribacter versatilis (strain Ellin345).